A 75-amino-acid chain; its full sequence is MAIWVAIILIVIALIAGLIGGFLLARKYMKDYLKKNPPINEEMLRMMMMQMGQKPSQKKINQMMTMMNKNMNQKM.

The helical transmembrane segment at 3–23 (IWVAIILIVIALIAGLIGGFL) threads the bilayer.

It belongs to the UPF0154 family.

It localises to the membrane. In Staphylococcus epidermidis (strain ATCC 35984 / DSM 28319 / BCRC 17069 / CCUG 31568 / BM 3577 / RP62A), this protein is UPF0154 protein SERP0914.